The sequence spans 58 residues: Probable spore germination protein GerPD (58 aa).

Required for the formation of functionally normal spores. Could be involved in the establishment of normal spore coat structure and/or permeability, which allows the access of germinants to their receptor. The protein is Probable spore germination protein GerPD (gerPD) of Bacillus subtilis (strain 168).